We begin with the raw amino-acid sequence, 332 residues long: 2,3-diketo-L-gulonate reductase (332 aa).

H44 (proton donor) is an active-site residue. NAD(+)-binding positions include I168–S174, W224–K225, and G304–E306.

Belongs to the LDH2/MDH2 oxidoreductase family. DlgD subfamily. As to quaternary structure, homodimer.

The protein localises to the cytoplasm. It catalyses the reaction 3-dehydro-L-gulonate + NAD(+) = 2,3-dioxo-L-gulonate + NADH + H(+). It carries out the reaction 3-dehydro-L-gulonate + NADP(+) = 2,3-dioxo-L-gulonate + NADPH + H(+). Catalyzes the reduction of 2,3-diketo-L-gulonate in the presence of NADH, to form 3-keto-L-gulonate. This chain is 2,3-diketo-L-gulonate reductase, found in Salmonella agona (strain SL483).